The sequence spans 241 residues: Triosephosphate isomerase (241 aa).

9–11 (NWK) serves as a coordination point for substrate. The Electrophile role is filled by H96. The active-site Proton acceptor is the E165. Substrate contacts are provided by residues G171, S204, and 225 to 226 (GG).

This sequence belongs to the triosephosphate isomerase family. As to quaternary structure, homodimer.

It is found in the cytoplasm. The catalysed reaction is D-glyceraldehyde 3-phosphate = dihydroxyacetone phosphate. The protein operates within carbohydrate biosynthesis; gluconeogenesis. Its pathway is carbohydrate degradation; glycolysis; D-glyceraldehyde 3-phosphate from glycerone phosphate: step 1/1. Its function is as follows. Involved in the gluconeogenesis. Catalyzes stereospecifically the conversion of dihydroxyacetone phosphate (DHAP) to D-glyceraldehyde-3-phosphate (G3P). The polypeptide is Triosephosphate isomerase (Acaryochloris marina (strain MBIC 11017)).